Reading from the N-terminus, the 131-residue chain is Probable ATP synthase subunit g 2, mitochondrial (131 aa).

The protein belongs to the ATPase g subunit family. As to quaternary structure, subunit of the F-type ATPase which has 2 components, CF(1) - the catalytic core - and CF(0) - the membrane proton channel.

It is found in the mitochondrion membrane. Functionally, mitochondrial membrane ATP synthase (F(1)F(0) ATP synthase or Complex V) produces ATP from ADP in the presence of a proton gradient across the membrane which is generated by electron transport complexes of the respiratory chain. F-type ATPases consist of two structural domains, F(1) - containing the extramembraneous catalytic core, and F(0) - containing the membrane proton channel, linked together by a central stalk and a peripheral stalk. During catalysis, ATP synthesis in the catalytic domain of F(1) is coupled via a rotary mechanism of the central stalk subunits to proton translocation. Part of the complex F(0) domain. Minor subunit located with subunit a in the membrane. The protein is Probable ATP synthase subunit g 2, mitochondrial of Caenorhabditis elegans.